A 295-amino-acid polypeptide reads, in one-letter code: Foldase protein PrsA (295 aa).

A signal peptide spans 1–19; it reads MKKVLIGFASIAMAFTLAA. A lipid anchor (N-palmitoyl cysteine) is attached at cysteine 20. The S-diacylglycerol cysteine moiety is linked to residue cysteine 20. Residues 136 to 229 form the PpiC domain; that stretch reads EPKVTVAQIL…YGYQVIKMIN (94 aa).

It belongs to the PrsA family.

It localises to the cell membrane. The enzyme catalyses [protein]-peptidylproline (omega=180) = [protein]-peptidylproline (omega=0). Its function is as follows. Plays a major role in protein secretion by helping the post-translocational extracellular folding of several secreted proteins. The chain is Foldase protein PrsA from Pediococcus pentosaceus (strain ATCC 25745 / CCUG 21536 / LMG 10740 / 183-1w).